A 286-amino-acid polypeptide reads, in one-letter code: Pyridoxal kinase PdxY (286 aa).

Substrate-binding positions include Ser9 and 44–45 (MQ). Positions 111, 147, and 180 each coordinate ATP. Asp221 contributes to the substrate binding site.

This sequence belongs to the pyridoxine kinase family. PdxY subfamily. In terms of assembly, homodimer. It depends on Mg(2+) as a cofactor.

It catalyses the reaction pyridoxal + ATP = pyridoxal 5'-phosphate + ADP + H(+). Its pathway is cofactor metabolism; pyridoxal 5'-phosphate salvage; pyridoxal 5'-phosphate from pyridoxal: step 1/1. Functionally, pyridoxal kinase involved in the salvage pathway of pyridoxal 5'-phosphate (PLP). Catalyzes the phosphorylation of pyridoxal to PLP. In Burkholderia orbicola (strain AU 1054), this protein is Pyridoxal kinase PdxY.